A 173-amino-acid chain; its full sequence is Adenine phosphoribosyltransferase (173 aa).

Belongs to the purine/pyrimidine phosphoribosyltransferase family. In terms of assembly, homodimer.

It localises to the cytoplasm. It carries out the reaction AMP + diphosphate = 5-phospho-alpha-D-ribose 1-diphosphate + adenine. The protein operates within purine metabolism; AMP biosynthesis via salvage pathway; AMP from adenine: step 1/1. Functionally, catalyzes a salvage reaction resulting in the formation of AMP, that is energically less costly than de novo synthesis. This chain is Adenine phosphoribosyltransferase, found in Macrococcus caseolyticus (strain JCSC5402) (Macrococcoides caseolyticum).